Consider the following 283-residue polypeptide: ATP phosphoribosyltransferase (283 aa).

The protein belongs to the ATP phosphoribosyltransferase family. Long subfamily. Mg(2+) serves as cofactor.

The protein resides in the cytoplasm. The catalysed reaction is 1-(5-phospho-beta-D-ribosyl)-ATP + diphosphate = 5-phospho-alpha-D-ribose 1-diphosphate + ATP. Its pathway is amino-acid biosynthesis; L-histidine biosynthesis; L-histidine from 5-phospho-alpha-D-ribose 1-diphosphate: step 1/9. Feedback inhibited by histidine. Its function is as follows. Catalyzes the condensation of ATP and 5-phosphoribose 1-diphosphate to form N'-(5'-phosphoribosyl)-ATP (PR-ATP). Has a crucial role in the pathway because the rate of histidine biosynthesis seems to be controlled primarily by regulation of HisG enzymatic activity. This chain is ATP phosphoribosyltransferase, found in Bifidobacterium longum (strain NCC 2705).